A 159-amino-acid chain; its full sequence is MRKNESYLNQPAPPIPIPTLSLMGGCREHFENHWKGRARWLMPVIPALWEAKAGRSPEVRSSKPAWPTWRNPIFTKNTKISQVLELFLNYQSLICALEKQKRQKGSLAIFCWSFQGGCVSKRPDVPSLKSQKPKRKRITGRKRLSKGFWSLLFSNLGRF.

This is an uncharacterized protein from Homo sapiens (Human).